The chain runs to 123 residues: MHELSYATSIVNAIMEHITNMEQANKVKKVSKINLEIGELTFINFEQLKFAFEVASEGTLCKDAKLEAEFLKPHIACNNCGYRGELTANDEFEVKCPECGSLSLKISGGKEFNIKNAILESDE.

Ni(2+) is bound at residue histidine 2. Zn(2+) contacts are provided by cysteine 77, cysteine 80, cysteine 96, and cysteine 99.

This sequence belongs to the HypA/HybF family.

Functionally, involved in the maturation of [NiFe] hydrogenases. Required for nickel insertion into the metal center of the hydrogenase. This is Hydrogenase maturation factor HypA from Methanococcus aeolicus (strain ATCC BAA-1280 / DSM 17508 / OCM 812 / Nankai-3).